Reading from the N-terminus, the 254-residue chain is Persulfide dioxygenase ETHE1, mitochondrial (254 aa).

The N-terminal 7 residues, 1–7 (MAEAVLR), are a transit peptide targeting the mitochondrion. Phosphoserine occurs at positions 14 and 19. K66 carries the post-translational modification N6-acetyllysine. Residues H79, H135, and D154 each coordinate Fe cation. K172 carries the post-translational modification N6-acetyllysine; alternate. The residue at position 172 (K172) is an N6-succinyllysine; alternate.

It belongs to the metallo-beta-lactamase superfamily. Glyoxalase II family. As to quaternary structure, homodimer. Monomer. Interacts with TST. May interact with RELA. The cofactor is Fe(2+). Ubiquitously expressed.

The protein localises to the cytoplasm. The protein resides in the nucleus. It localises to the mitochondrion matrix. The catalysed reaction is S-sulfanylglutathione + O2 + H2O = sulfite + glutathione + 2 H(+). Glutathione increases enzyme activity. In terms of biological role, sulfur dioxygenase that plays an essential role in hydrogen sulfide catabolism in the mitochondrial matrix. Hydrogen sulfide (H(2)S) is first oxidized by SQRDL, giving rise to cysteine persulfide residues. ETHE1 consumes molecular oxygen to catalyze the oxidation of the persulfide, once it has been transferred to a thiophilic acceptor, such as glutathione (R-SSH). Plays an important role in metabolic homeostasis in mitochondria by metabolizing hydrogen sulfide and preventing the accumulation of supraphysiological H(2)S levels that have toxic effects, due to the inhibition of cytochrome c oxidase. First described as a protein that can shuttle between the nucleus and the cytoplasm and suppress p53-induced apoptosis by sequestering the transcription factor RELA/NFKB3 in the cytoplasm and preventing its accumulation in the nucleus. The protein is Persulfide dioxygenase ETHE1, mitochondrial (ETHE1) of Homo sapiens (Human).